The primary structure comprises 352 residues: Serine/threonine-protein phosphatase 2A activator 2 (352 aa).

It belongs to the PTPA-type PPIase family.

The protein localises to the cytoplasm. It carries out the reaction [protein]-peptidylproline (omega=180) = [protein]-peptidylproline (omega=0). PPIases accelerate the folding of proteins. It catalyzes the cis-trans isomerization of proline imidic peptide bonds in oligopeptides. Acts as a regulatory subunit for PP2A-like phosphatases modulating their activity or substrate specificity, probably by inducing a conformational change in the catalytic subunit, a direct target of the PPIase. Can reactivate inactive phosphatase PP2A-phosphatase methylesterase complexes (PP2Ai) in presence of ATP and Mg(2+) by dissociating the inactive form from the complex. The polypeptide is Serine/threonine-protein phosphatase 2A activator 2 (rrd2) (Schizosaccharomyces pombe (strain 972 / ATCC 24843) (Fission yeast)).